We begin with the raw amino-acid sequence, 318 residues long: GTP cyclohydrolase MptA (318 aa).

It belongs to the GTP cyclohydrolase IV family. In terms of assembly, homodimer. It depends on Fe(2+) as a cofactor.

It catalyses the reaction GTP + H2O = 7,8-dihydroneopterin 2',3'-cyclic phosphate + formate + diphosphate + H(+). Its pathway is cofactor biosynthesis; 5,6,7,8-tetrahydromethanopterin biosynthesis. Its function is as follows. Converts GTP to 7,8-dihydro-D-neopterin 2',3'-cyclic phosphate, the first intermediate in the biosynthesis of coenzyme methanopterin. This is GTP cyclohydrolase MptA from Methanosarcina mazei (strain ATCC BAA-159 / DSM 3647 / Goe1 / Go1 / JCM 11833 / OCM 88) (Methanosarcina frisia).